The chain runs to 234 residues: Adenosine 5'-phosphosulfate reductase (234 aa).

The [4Fe-4S] cluster site is built by Cys120, Cys121, Cys203, and Cys206. The Nucleophile; cysteine thiosulfonate intermediate role is filled by Cys229.

It belongs to the PAPS reductase family. CysH subfamily. [4Fe-4S] cluster is required as a cofactor.

Its subcellular location is the cytoplasm. The catalysed reaction is [thioredoxin]-disulfide + sulfite + AMP + 2 H(+) = adenosine 5'-phosphosulfate + [thioredoxin]-dithiol. It functions in the pathway sulfur metabolism; hydrogen sulfide biosynthesis; sulfite from sulfate. Catalyzes the formation of sulfite from adenosine 5'-phosphosulfate (APS) using thioredoxin as an electron donor. In Bacillus cereus (strain AH187), this protein is Adenosine 5'-phosphosulfate reductase.